The following is a 211-amino-acid chain: Thiamine-phosphate synthase (211 aa).

Residues 41-45 and Asn-73 each bind 4-amino-2-methyl-5-(diphosphooxymethyl)pyrimidine; that span reads QYRDK. The Mg(2+) site is built by Asp-74 and Asp-93. Position 112 (Thr-112) interacts with 4-amino-2-methyl-5-(diphosphooxymethyl)pyrimidine. Residue 139-141 participates in 2-[(2R,5Z)-2-carboxy-4-methylthiazol-5(2H)-ylidene]ethyl phosphate binding; it reads SPT. Residue Lys-142 participates in 4-amino-2-methyl-5-(diphosphooxymethyl)pyrimidine binding. 2-[(2R,5Z)-2-carboxy-4-methylthiazol-5(2H)-ylidene]ethyl phosphate contacts are provided by residues Gly-169 and 189 to 190; that span reads VS.

It belongs to the thiamine-phosphate synthase family. Mg(2+) is required as a cofactor.

It catalyses the reaction 2-[(2R,5Z)-2-carboxy-4-methylthiazol-5(2H)-ylidene]ethyl phosphate + 4-amino-2-methyl-5-(diphosphooxymethyl)pyrimidine + 2 H(+) = thiamine phosphate + CO2 + diphosphate. The catalysed reaction is 2-(2-carboxy-4-methylthiazol-5-yl)ethyl phosphate + 4-amino-2-methyl-5-(diphosphooxymethyl)pyrimidine + 2 H(+) = thiamine phosphate + CO2 + diphosphate. It carries out the reaction 4-methyl-5-(2-phosphooxyethyl)-thiazole + 4-amino-2-methyl-5-(diphosphooxymethyl)pyrimidine + H(+) = thiamine phosphate + diphosphate. It participates in cofactor biosynthesis; thiamine diphosphate biosynthesis; thiamine phosphate from 4-amino-2-methyl-5-diphosphomethylpyrimidine and 4-methyl-5-(2-phosphoethyl)-thiazole: step 1/1. In terms of biological role, condenses 4-methyl-5-(beta-hydroxyethyl)thiazole monophosphate (THZ-P) and 2-methyl-4-amino-5-hydroxymethyl pyrimidine pyrophosphate (HMP-PP) to form thiamine monophosphate (TMP). In Thioalkalivibrio sulfidiphilus (strain HL-EbGR7), this protein is Thiamine-phosphate synthase.